The following is a 270-amino-acid chain: 3-methyl-2-oxobutanoate hydroxymethyltransferase (270 aa).

D53 and D92 together coordinate Mg(2+). 3-methyl-2-oxobutanoate contacts are provided by residues 53–54 (DS), D92, and K120. E122 provides a ligand contact to Mg(2+). E189 functions as the Proton acceptor in the catalytic mechanism.

It belongs to the PanB family. As to quaternary structure, homodecamer; pentamer of dimers. It depends on Mg(2+) as a cofactor.

The protein localises to the cytoplasm. It catalyses the reaction 3-methyl-2-oxobutanoate + (6R)-5,10-methylene-5,6,7,8-tetrahydrofolate + H2O = 2-dehydropantoate + (6S)-5,6,7,8-tetrahydrofolate. It participates in cofactor biosynthesis; (R)-pantothenate biosynthesis; (R)-pantoate from 3-methyl-2-oxobutanoate: step 1/2. In terms of biological role, catalyzes the reversible reaction in which hydroxymethyl group from 5,10-methylenetetrahydrofolate is transferred onto alpha-ketoisovalerate to form ketopantoate. The chain is 3-methyl-2-oxobutanoate hydroxymethyltransferase from Saccharophagus degradans (strain 2-40 / ATCC 43961 / DSM 17024).